We begin with the raw amino-acid sequence, 580 residues long: Alpha-thujene synthase, chloroplastic (580 aa).

The transit peptide at 1 to 32 (MALQLLTPSFSFQHSPSPHKLTTLRYTHHRIR) directs the protein to the chloroplast. (2E)-geranyl diphosphate is bound by residues R296, D333, D337, R473, and D476. Positions 333 and 337 each coordinate Mg(2+). A DDXXD motif motif is present at residues 333 to 337 (DDVYD). 3 residues coordinate Mg(2+): D476, T480, and E484.

This sequence belongs to the terpene synthase family. Tpsb subfamily. In terms of assembly, monomer. Requires Mg(2+) as cofactor. Mn(2+) serves as cofactor. In terms of tissue distribution, expressed in developing and mature fruits. Barely detectable in leaves and shoots.

It localises to the plastid. It is found in the chloroplast. It carries out the reaction (2E)-geranyl diphosphate = alpha-thujene + diphosphate. Its pathway is secondary metabolite biosynthesis; terpenoid biosynthesis. Its function is as follows. Monoterpene synthase (TPS) involved in the biosynthesis of monoterpene natural products used by traditional Chinese medicine to treat headache, inflammation and intoxication. Catalyzes the conversion of (2E)-geranyl diphosphate (GPP) into alpha-thujene. The polypeptide is Alpha-thujene synthase, chloroplastic (Litsea cubeba (Aromatic litsea)).